A 211-amino-acid polypeptide reads, in one-letter code: MKFLSARDFQPVAFLGLMLLTATAFPTSQVRRGDFTEDTTHNRPVYTTSQVGGLITYVLREILEMRKELCNGNSDCMNSDDALSENNLKLPEIQRNDGCFQTGYNQEICLLKICSGLLEFRFYLEFVKNNLQDNKKDKARVIQSNTETLVHIFKQEIKDSYKIVLPTPTSNALLMEKLESQKEWLRTKTIQLILKALEEFLKVTMRSTRQT.

The N-terminal stretch at 1–24 (MKFLSARDFQPVAFLGLMLLTATA) is a signal peptide. Cysteine 70 and cysteine 76 are joined by a disulfide. Phosphoserine is present on serine 79. Cysteine 99 and cysteine 109 are joined by a disulfide.

Belongs to the IL-6 superfamily. Component of a hexamer of two molecules each of IL6, IL6R and IL6ST; first binds to IL6R to associate with the signaling subunit IL6ST. Interacts with IL6R (via the N-terminal ectodomain); this interaction may be affected by IL6R-binding with SORL1, hence decreasing IL6 cis signaling. Interacts with SORL1 (via the N-terminal ectodomain); this interaction leads to IL6 internalization and lysosomal degradation. May form a trimeric complex with the soluble SORL1 ectodomain and soluble IL6R receptor; this interaction might stabilize circulating IL6, hence promoting IL6 trans signaling.

It is found in the secreted. In terms of biological role, cytokine with a wide variety of biological functions in immunity, tissue regeneration, and metabolism. Binds to IL6R, then the complex associates to the signaling subunit IL6ST/gp130 to trigger the intracellular IL6-signaling pathway. The interaction with the membrane-bound IL6R and IL6ST stimulates 'classic signaling', whereas the binding of IL6 and soluble IL6R to IL6ST stimulates 'trans-signaling'. Alternatively, 'cluster signaling' occurs when membrane-bound IL6:IL6R complexes on transmitter cells activate IL6ST receptors on neighboring receiver cells. Functionally, IL6 is a potent inducer of the acute phase response. Rapid production of IL6 contributes to host defense during infection and tissue injury, but excessive IL6 synthesis is involved in disease pathology. In the innate immune response, is synthesized by myeloid cells, such as macrophages and dendritic cells, upon recognition of pathogens through toll-like receptors (TLRs) at the site of infection or tissue injury. In the adaptive immune response, is required for the differentiation of B-cells into immunoglolin-secreting cells. Plays a major role in the differentiation of CD4(+) T cell subsets. Essential factor for the development of T follicular helper (Tfh) cells that are required for the induction of germinal-center formation. Together with IL21, controls the early generation of Tfh cells and are critical for an effective antibody response to acute viral infection. Required to drive naive CD4(+) T cells to the Th17 lineage, through 'cluster signaling' by dendritic cells. Also required for proliferation of myeloma cells and the survival of plasmablast cells. Acts as an essential factor in bone homeostasis and on vessels directly or indirectly by induction of VEGF, resulting in increased angiogenesis activity and vascular permeability. Induces, through 'trans-signaling' and synergistically with IL1B and TNF, the production of VEGF. Involved in metabolic controls, is discharged into the bloodstream after muscle contraction increasing lipolysis and improving insulin resistance. 'Trans-signaling' in central nervous system regulates energy and glucose homeostasis. Mediates, through GLP-1, crosstalk between insulin-sensitive tissues, intestinal L cells and pancreatic islets to adapt to changes in insulin demand. Also acts as a myokine. Plays a protective role during liver injury, being required for maintenance of tissue regeneration. Also has a pivotal role in iron metabolism by regulating HAMP/hepcidin expression upon inflammation or bacterial infection. Through activation of IL6ST-YAP-NOTCH pathway, induces inflammation-induced epithelial regeneration. The polypeptide is Interleukin-6 (Rattus norvegicus (Rat)).